The chain runs to 231 residues: Putative Nudix hydrolase FPV054 (231 aa).

In terms of domain architecture, Nudix hydrolase spans 74-217 (SKRRSFSEIL…SNEKYEYLHF (144 aa)). Positions 125–146 (GRVKNKESIYQCLSRELSEESD) match the Nudix box motif. E131 contributes to the Mg(2+) binding site. E140 serves as the catalytic Nucleophile. E144 and D165 together coordinate Mg(2+).

The protein belongs to the Nudix hydrolase family. Mg(2+) is required as a cofactor. It depends on Mn(2+) as a cofactor.

Decapping enzyme required for the removal of the 5'-end m7GpppN cap tethered to viral and host mRNAs to allow their decay in cells. May therefore accelerate viral and cellular mRNA turnover to eliminate competing host mRNAs and allow stage-specific synthesis of viral proteins. Acceleration of the turnover of cellular transcripts may even promote the shutoff of host protein synthesis. Does not cleave unmethylated RNAs or RNAs shorter than 24 nucleotides. The polypeptide is Putative Nudix hydrolase FPV054 (Vertebrata (FPV)).